The sequence spans 337 residues: Alanine racemase (337 aa).

Lysine 33 serves as the catalytic Proton acceptor; specific for D-alanine. Lysine 33 carries the N6-(pyridoxal phosphate)lysine modification. Position 118 (arginine 118) interacts with substrate. Tyrosine 246 functions as the Proton acceptor; specific for L-alanine in the catalytic mechanism. Methionine 292 is a substrate binding site.

This sequence belongs to the alanine racemase family. The cofactor is pyridoxal 5'-phosphate.

The catalysed reaction is L-alanine = D-alanine. It functions in the pathway amino-acid biosynthesis; D-alanine biosynthesis; D-alanine from L-alanine: step 1/1. Functionally, catalyzes the interconversion of L-alanine and D-alanine. May also act on other amino acids. This Campylobacter concisus (strain 13826) protein is Alanine racemase (alr).